Here is a 225-residue protein sequence, read N- to C-terminus: Ribosomal RNA large subunit methyltransferase E (225 aa).

S-adenosyl-L-methionine contacts are provided by glycine 79, tryptophan 81, aspartate 97, aspartate 113, and aspartate 137. Lysine 177 serves as the catalytic Proton acceptor.

It belongs to the class I-like SAM-binding methyltransferase superfamily. RNA methyltransferase RlmE family.

It is found in the cytoplasm. The enzyme catalyses uridine(2552) in 23S rRNA + S-adenosyl-L-methionine = 2'-O-methyluridine(2552) in 23S rRNA + S-adenosyl-L-homocysteine + H(+). Functionally, specifically methylates the uridine in position 2552 of 23S rRNA at the 2'-O position of the ribose in the fully assembled 50S ribosomal subunit. The sequence is that of Ribosomal RNA large subunit methyltransferase E from Acidiphilium cryptum (strain JF-5).